Consider the following 382-residue polypeptide: D-galactonate dehydratase (382 aa).

Asp183 lines the Mg(2+) pocket. His185 functions as the Proton donor in the catalytic mechanism. Mg(2+) is bound by residues Glu209 and Glu235. The Proton acceptor role is filled by His285.

Belongs to the mandelate racemase/muconate lactonizing enzyme family. GalD subfamily. Requires Mg(2+) as cofactor.

It carries out the reaction D-galactonate = 2-dehydro-3-deoxy-D-galactonate + H2O. It participates in carbohydrate acid metabolism; D-galactonate degradation; D-glyceraldehyde 3-phosphate and pyruvate from D-galactonate: step 1/3. In terms of biological role, catalyzes the dehydration of D-galactonate to 2-keto-3-deoxy-D-galactonate. This chain is D-galactonate dehydratase, found in Salmonella paratyphi A (strain AKU_12601).